Here is a 140-residue protein sequence, read N- to C-terminus: Hemoglobin subunit beta (140 aa).

In terms of domain architecture, Globin spans 1–140 (GGSDVSAFLA…VGEALAKGYH (140 aa)). Heme b-binding residues include histidine 57 and histidine 86.

The protein belongs to the globin family. In terms of assembly, heterotetramer of either two alpha-B chains or two alpha-C chains and two beta chains.

Its function is as follows. The beta chain is a component of adult hemoglobins B. And C. This Aquarana catesbeiana (American bullfrog) protein is Hemoglobin subunit beta (HBB).